The primary structure comprises 205 residues: UPF0111 protein YkaA (205 aa).

Belongs to the UPF0111 family.

This is UPF0111 protein YkaA (ykaA) from Bacillus subtilis (strain 168).